Here is a 230-residue protein sequence, read N- to C-terminus: DNA repair protein rdl1 (230 aa).

In terms of assembly, interacts with rlp1 and sws1.

It localises to the cytoplasm. It is found in the nucleus. Functionally, involved in homologous recombination where it functions at an early stage of recombination in a pre-recombinogenic complex with rlp1 and sws1. Also has a role at a later stage of recombination in association with the rhp55-rhp57 complex. This is DNA repair protein rdl1 (rdl1) from Schizosaccharomyces pombe (strain 972 / ATCC 24843) (Fission yeast).